The primary structure comprises 79 residues: uncharacterized protein (79 aa).

The span at 22-72 shows a compositional bias: low complexity; the sequence is NNNNNNNNNNNNNNNNNNNNNNNNNNNNNNNNNNNNNNNNNNNNNNNNNNN. Residues 22-79 are disordered; that stretch reads NNNNNNNNNNNNNNNNNNNNNNNNNNNNNNNNNNNNNNNNNNNNNNNNNNNKRFFFFG.

This is an uncharacterized protein from Dictyostelium discoideum (Social amoeba).